We begin with the raw amino-acid sequence, 323 residues long: MKVAVLFLCGVALAAASPSWEHFKGKYGRQYVDAEEDSYRRVIFEQNQKYIEEFNKKYENGEVTFNLAMNKFGDMTLEEFNAVMKGNIPRRSAPVSVFYPKKETGPQATEVDWRTKGAVTPVKDQGQCGSCWAFSTTGSLEGQHFLKTGSLISLAEQQLVDCSRPYGPQGCNGGWMNDAFDYIKANNGIDTEAAYPYEARDGSCRFDSNSVAATCSGHTNIASGSETGLQQAVRDIGPISVTIDAAHSSFQFYSSGVYYEPSCSPSYLDHAVLAVGYGSEGGQDFWLVKNSWATSWGDAGYIKMSRNRNNNCGIATVASYPLV.

Residues 1 to 16 (MKVAVLFLCGVALAAA) form the signal peptide. Residues 17–107 (SPSWEHFKGK…FYPKKETGPQ (91 aa)) constitute a propeptide, activation peptide. 3 disulfide bridges follow: Cys128/Cys171, Cys162/Cys204, and Cys263/Cys312. Residue Cys131 is part of the active site. Active-site residues include His270 and Asn290.

This sequence belongs to the peptidase C1 family.

With respect to regulation, inhibited by E-64, antipain, leupeptin, heavy metal ions, iodoacetic acid, dithionitrobenzene, p-hydroxymercuri-benzoate; activated by mercaptoethanol and dithiothreitol. The polypeptide is Digestive cysteine proteinase 2 (LCP2) (Homarus americanus (American lobster)).